Here is an 888-residue protein sequence, read N- to C-terminus: Collagen alpha chain (888 aa).

The tract at residues alanine 1 to glutamate 627 is disordered. One can recognise a Collagen-like 1 domain in the interval glycine 3–glycine 60. Low complexity-rich tracts occupy residues proline 59–threonine 73 and threonine 148–isoleucine 164. A compositionally biased stretch (basic and acidic residues) spans arginine 179–arginine 190. Residues proline 194–proline 203 show a composition bias toward low complexity. Residues serine 311–serine 320 are compositionally biased toward pro residues. The segment covering serine 422–asparagine 440 has biased composition (low complexity). Residues glycine 441–glycine 450 are compositionally biased toward gly residues. Low complexity-rich tracts occupy residues glutamate 460 to proline 475 and glutamate 508 to lysine 518. The 59-residue stretch at glycine 513–glutamate 571 folds into the Collagen-like 2 domain. Pro residues predominate over residues proline 610–glutamine 622. In terms of domain architecture, Fibrillar collagen NC1 spans glutamate 661 to histidine 884. 2 disulfide bridges follow: cysteine 731-cysteine 882 and cysteine 793-cysteine 833.

Belongs to the fibrillar collagen family. Component of the acid-insoluble organic matrix of the aragonitic skeleton (at protein level).

It is found in the secreted. The sequence is that of Collagen alpha chain from Acropora millepora (Staghorn coral).